The chain runs to 425 residues: 5-aminovalerate aminotransferase DavT (425 aa).

Pyridoxal 5'-phosphate is bound by residues 112-113, Tyr139, and 240-243; these read GS and DEVQ. Lys269 carries the post-translational modification N6-(pyridoxal phosphate)lysine. A pyridoxal 5'-phosphate-binding site is contributed by Thr298.

This sequence belongs to the class-III pyridoxal-phosphate-dependent aminotransferase family. Pyridoxal 5'-phosphate serves as cofactor.

The catalysed reaction is 5-aminopentanoate + 2-oxoglutarate = 5-oxopentanoate + L-glutamate. Its function is as follows. Catalyzes the conversion of 5-aminovalerate to 5-oxopentanoate. This Pseudomonas putida (strain ATCC 47054 / DSM 6125 / CFBP 8728 / NCIMB 11950 / KT2440) protein is 5-aminovalerate aminotransferase DavT (davT).